The following is a 157-amino-acid chain: Small ribosomal subunit protein bS16 (157 aa).

A disordered region spans residues 114–157 (NEGPTAEAITEKKKKAKEEAAAKAAAEAEAAAKAEEAPAEEAAE).

This sequence belongs to the bacterial ribosomal protein bS16 family.

The chain is Small ribosomal subunit protein bS16 from Corynebacterium diphtheriae (strain ATCC 700971 / NCTC 13129 / Biotype gravis).